Reading from the N-terminus, the 91-residue chain is Small ribosomal subunit protein uS19 (91 aa).

The protein belongs to the universal ribosomal protein uS19 family.

In terms of biological role, protein S19 forms a complex with S13 that binds strongly to the 16S ribosomal RNA. This is Small ribosomal subunit protein uS19 from Lachnospira eligens (strain ATCC 27750 / DSM 3376 / VPI C15-48 / C15-B4) (Eubacterium eligens).